The sequence spans 461 residues: Asparagine--tRNA ligase (461 aa).

This sequence belongs to the class-II aminoacyl-tRNA synthetase family. As to quaternary structure, homodimer.

Its subcellular location is the cytoplasm. The catalysed reaction is tRNA(Asn) + L-asparagine + ATP = L-asparaginyl-tRNA(Asn) + AMP + diphosphate + H(+). The protein is Asparagine--tRNA ligase of Nitratidesulfovibrio vulgaris (strain ATCC 29579 / DSM 644 / CCUG 34227 / NCIMB 8303 / VKM B-1760 / Hildenborough) (Desulfovibrio vulgaris).